A 459-amino-acid chain; its full sequence is Carbonic anhydrase 9 (459 aa).

An N-terminal signal peptide occupies residues 1-37 (MAPLCPSPWLPLLIPAPAPGLTVQLLLSLLLLVPVHP). The segment at 38–112 (QRLPRMQEDS…EEEGSLKLED (75 aa)) is proteoglycan-like (PG). The Extracellular segment spans residues 38-414 (QRLPRMQEDS…QLNSCLAAGD (377 aa)). The tract at residues 42-154 (RMQEDSPLGG…GDPPWPRVSP (113 aa)) is disordered. Over residues 55–95 (GEDDPLGEEDLPSEEDSPREEDPPGEEDLPGEEDLPGEEDL) the composition is skewed to acidic residues. Basic and acidic residues predominate over residues 96-112 (PEVKPKSEEEGSLKLED). Thr115 carries O-linked (GlcNAc...) threonine glycosylation. The span at 129–140 (AHRDKEGDDQSH) shows a compositional bias: basic and acidic residues. The catalytic stretch occupies residues 138–391 (QSHWRYGGDP…NGRVIEASFP (254 aa)). One can recognise an Alpha-carbonic anhydrase domain in the interval 139–390 (SHWRYGGDPP…LNGRVIEASF (252 aa)). A disulfide bond links Cys156 and Cys336. His200 functions as the Proton donor/acceptor in the catalytic mechanism. Zn(2+) is bound by residues His226, His228, and His251. 332 to 333 (TT) serves as a coordination point for substrate. N-linked (GlcNAc...) asparagine glycosylation is present at Asn346. A helical membrane pass occupies residues 415-435 (ILALVFGLLFAVTSVAFLVQM). Residues 436–459 (RRQHRRGTKGGVSYRPAEVAETGA) lie on the Cytoplasmic side of the membrane. Tyr449 is subject to Phosphotyrosine.

This sequence belongs to the alpha-carbonic anhydrase family. Forms oligomers linked by disulfide bonds. Zn(2+) is required as a cofactor. Post-translationally, asn-346 bears high-mannose type glycan structures. Expressed primarily in carcinoma cells lines. Expression is restricted to very few normal tissues and the most abundant expression is found in the epithelial cells of gastric mucosa.

The protein localises to the nucleus. Its subcellular location is the nucleolus. The protein resides in the cell membrane. It localises to the cell projection. It is found in the microvillus membrane. The catalysed reaction is hydrogencarbonate + H(+) = CO2 + H2O. Its activity is regulated as follows. Inhibited by coumarins, saccharin, sulfonamide derivatives such as acetazolamide (AZA) and Foscarnet (phosphonoformate trisodium salt). Its function is as follows. Catalyzes the interconversion between carbon dioxide and water and the dissociated ions of carbonic acid (i.e. bicarbonate and hydrogen ions). This Homo sapiens (Human) protein is Carbonic anhydrase 9 (CA9).